The sequence spans 474 residues: AAA-ATPase At3g28610 (474 aa).

The signal sequence occupies residues 1–25; it reads MMGNMFGSSLASLFFLWATIQQIFP. 244-251 is a binding site for ATP; that stretch reads GPPGTGKS.

The protein belongs to the AAA ATPase family. BCS1 subfamily. The cofactor is Mg(2+).

The enzyme catalyses ATP + H2O = ADP + phosphate + H(+). In Arabidopsis thaliana (Mouse-ear cress), this protein is AAA-ATPase At3g28610.